The chain runs to 80 residues: Translation initiation factor IF-1, chloroplastic (80 aa).

An S1-like domain is found at 1–72 (MKKQNLIDME…TKGRIIYRLR (72 aa)).

The protein belongs to the IF-1 family. Component of the 30S ribosomal translation pre-initiation complex which assembles on the 30S ribosome in the order IF-2 and IF-3, IF-1 and N-formylmethionyl-tRNA(fMet); mRNA recruitment can occur at any time during PIC assembly.

It is found in the plastid. Its subcellular location is the chloroplast. One of the essential components for the initiation of protein synthesis. Stabilizes the binding of IF-2 and IF-3 on the 30S subunit to which N-formylmethionyl-tRNA(fMet) subsequently binds. Helps modulate mRNA selection, yielding the 30S pre-initiation complex (PIC). Upon addition of the 50S ribosomal subunit IF-1, IF-2 and IF-3 are released leaving the mature 70S translation initiation complex. In Adiantum capillus-veneris (Maidenhair fern), this protein is Translation initiation factor IF-1, chloroplastic.